The chain runs to 67 residues: Probable Sec-independent protein translocase protein TatE (67 aa).

The helical transmembrane segment at 1–21 (MGEISITKLLVVAALVVLLFG) threads the bilayer. The disordered stretch occupies residues 45–67 (DEDAGAKKDANGDLPAEKLTHKE).

This sequence belongs to the TatA/E family. TatE subfamily.

The protein localises to the cell inner membrane. Part of the twin-arginine translocation (Tat) system that transports large folded proteins containing a characteristic twin-arginine motif in their signal peptide across membranes. TatE shares overlapping functions with TatA. This Escherichia fergusonii (strain ATCC 35469 / DSM 13698 / CCUG 18766 / IAM 14443 / JCM 21226 / LMG 7866 / NBRC 102419 / NCTC 12128 / CDC 0568-73) protein is Probable Sec-independent protein translocase protein TatE.